Reading from the N-terminus, the 407-residue chain is MQTPGVLLLILGLLDASSSALIRIPLRKFTSIRRTMTEVGGSVEDLILKGPITKYSMQSSPRTKEPVSELLKNYLDAQYYGEIGIGTPPQCFTVVFDTGSSNLWVPSIHCKLLDIACWVHHKYNSDKSSTYVKNGTSFDIHYGSGSLSGYLSQDTVSVPCKSDLGGIKVEKQIFGEATKQPGVVFIAAKFDGILGMGYPFISVNKVLPVFDNLMKQKLVEKNIFSFYLNRDPTGQPGGELMLGGTDSRYYHGELSYLNVTRKAYWQVHMDQLEVGSELTLCKGGCEAIVDTGTSLLVGPVDEVKELQKAIGAVPLIQGEYMIPCEKVSSLPIITFKLGGQNYELHPEKYILKVSQAGKTICLSGFMGMDIPPPSGPLWILGDVFIGCYYTVFDREYNRVGFAKAATL.

An N-terminal signal peptide occupies residues 1–20; the sequence is MQTPGVLLLILGLLDASSSA. The propeptide at 21 to 64 is activation peptide; sequence LIRIPLRKFTSIRRTMTEVGGSVEDLILKGPITKYSMQSSPRTK. Positions 79-402 constitute a Peptidase A1 domain; it reads YYGEIGIGTP…DREYNRVGFA (324 aa). 2 cysteine pairs are disulfide-bonded: Cys-91–Cys-160 and Cys-110–Cys-117. Asp-97 is an active-site residue. N-linked (GlcNAc...) asparagine glycosylation is found at Asn-134 and Asn-258. Cys-281 and Cys-285 are joined by a disulfide. The active site involves Asp-290. Cys-324 and Cys-361 form a disulfide bridge.

Belongs to the peptidase A1 family. Occurs as a mixture of both a single chain form and two types of two chain (light and heavy) forms. Interacts with ADAM30; this leads to activation of CTSD. N- and O-glycosylated. Post-translationally, undergoes proteolytic cleavage and activation by ADAM30.

The protein localises to the lysosome. It localises to the melanosome. It is found in the secreted. The protein resides in the extracellular space. The enzyme catalyses Specificity similar to, but narrower than, that of pepsin A. Does not cleave the 4-Gln-|-His-5 bond in B chain of insulin.. Its function is as follows. Acid protease active in intracellular protein breakdown. Plays a role in APP processing following cleavage and activation by ADAM30 which leads to APP degradation. The protein is Cathepsin D (Ctsd) of Rattus norvegicus (Rat).